Here is a 292-residue protein sequence, read N- to C-terminus: uncharacterized protein (292 aa).

This is an uncharacterized protein from Aquifex aeolicus (strain VF5).